A 318-amino-acid polypeptide reads, in one-letter code: Vomeronasal type-1 receptor A11 (318 aa).

At 1–32 (MSEILFFSPQPLFSHMMNKNSRLHTHSNIKNT) the chain is on the extracellular side. Residues 33-53 (FFSEIGIGISGNSFLLLFHIL) traverse the membrane as a helical segment. Residues 54–65 (KFIRGHRPRLTD) are Cytoplasmic-facing. Residues 66-86 (LPIGLLSLIHLLMLLLMAFIA) traverse the membrane as a helical segment. The Extracellular segment spans residues 87 to 101 (TDIFISRRGWDGIIC). Cysteine 101 and cysteine 188 are joined by a disulfide. The helical transmembrane segment at 102–118 (KFLVYLYGVLRGLSLCT) threads the bilayer. The Cytoplasmic segment spans residues 119-147 (TSMLSVLQAIILSPRSSCLAKLKHKSPHH). Residues 148-168 (ISCAIIFLSVLYMLISSHILL) traverse the membrane as a helical segment. Topologically, residues 169-206 (SITATPNLTMNDFLYVSQSCSLLPLSYLVQSMYSTLLA) are extracellular. Asparagine 175 carries N-linked (GlcNAc...) asparagine glycosylation. A helical transmembrane segment spans residues 207-227 (LREVFLISLMVLSTLYMVVLL). The Cytoplasmic portion of the chain corresponds to 228–254 (CRHRKQAQHLQGTSLSPKASAEQRATQ). The chain crosses the membrane as a helical span at residues 255 to 275 (TILMLMTFFVLMSIFDSIVSC). The Extracellular portion of the chain corresponds to 276–285 (SRTMFLDDPT). The helical transmembrane segment at 286–306 (SYSIHIFVMHIYATVSPFVFM) threads the bilayer. Residues 307–318 (STEKHIVNILRG) lie on the Cytoplasmic side of the membrane.

It belongs to the G-protein coupled receptor 1 family.

The protein localises to the cell membrane. Functionally, putative pheromone receptor implicated in the regulation of social and reproductive behavior. The protein is Vomeronasal type-1 receptor A11 of Mus musculus (Mouse).